Consider the following 37-residue polypeptide: QFTNVSCTTSKECWSVCEKLYNTSRGKCMNKKCRCYS.

Pyrrolidone carboxylic acid is present on glutamine 1. 3 cysteine pairs are disulfide-bonded: cysteine 7-cysteine 28, cysteine 13-cysteine 33, and cysteine 17-cysteine 35. Residues 26 to 33 (GKCMNKKC) are interaction with Ca(2+)-activated K(+) channels.

This sequence belongs to the short scorpion toxin superfamily. Potassium channel inhibitor family. Alpha-KTx 01 subfamily. As to expression, expressed by the venom gland.

The protein localises to the secreted. Its function is as follows. Potent selective inhibitor of high conductance (maxi-K), different medium and small conductance calcium-activated potassium channels (KCa1.1/KCNMA1 and others), as well as a voltage-dependent potassium channel (Kv1.3/KCNA3&gt;Kv1.2/KCNA2&gt;Kv1.6/KCNA3&gt;&gt;Shaker/Sh). It blocks channel activity by a simple bimolecular inhibition process. In terms of biological role, has a pH-specific antimicrobial activity against bacteria (B.subtilis, E.coli and S.aureus) and the fungus C.albicans. This is Potassium channel toxin alpha-KTx 1.13 from Leiurus hebraeus (Hebrew deathstalker scorpion).